Reading from the N-terminus, the 287-residue chain is ATP synthase gamma chain (287 aa).

Belongs to the ATPase gamma chain family. In terms of assembly, F-type ATPases have 2 components, CF(1) - the catalytic core - and CF(0) - the membrane proton channel. CF(1) has five subunits: alpha(3), beta(3), gamma(1), delta(1), epsilon(1). CF(0) has three main subunits: a, b and c.

It localises to the cell inner membrane. In terms of biological role, produces ATP from ADP in the presence of a proton gradient across the membrane. The gamma chain is believed to be important in regulating ATPase activity and the flow of protons through the CF(0) complex. The sequence is that of ATP synthase gamma chain from Citrobacter koseri (strain ATCC BAA-895 / CDC 4225-83 / SGSC4696).